The chain runs to 720 residues: Polyribonucleotide nucleotidyltransferase (720 aa).

Residues Asp484 and Asp490 each coordinate Mg(2+). Residues 551 to 610 (PRMYKISIDPSKIGSVIGSGGKTIRSIIEQTNTTVDIENDGTVVIGATDEASAQKAIKII) form the KH domain. In terms of domain architecture, S1 motif spans 620–688 (GSVYTGKVTR…SQGRINLSRR (69 aa)). Residues 697–720 (PISRNRDSQPRRSGPFRPQDRSNS) are disordered.

The protein belongs to the polyribonucleotide nucleotidyltransferase family. It depends on Mg(2+) as a cofactor.

It is found in the cytoplasm. It carries out the reaction RNA(n+1) + phosphate = RNA(n) + a ribonucleoside 5'-diphosphate. Its function is as follows. Involved in mRNA degradation. Catalyzes the phosphorolysis of single-stranded polyribonucleotides processively in the 3'- to 5'-direction. This chain is Polyribonucleotide nucleotidyltransferase, found in Dehalococcoides mccartyi (strain ATCC BAA-2266 / KCTC 15142 / 195) (Dehalococcoides ethenogenes (strain 195)).